The primary structure comprises 476 residues: Ankyrin repeat, SAM and basic leucine zipper domain-containing protein 1 (476 aa).

Phosphoserine is present on residues Ser18 and Ser21. ANK repeat units follow at residues 46–75, 79–108, 111–145, 149–178, 182–211, and 215–244; these read EKNETFKKALTTGDISLVEELLDSGISIDS, YGWTPLMYAASVANVELVRVLLDRGANASF, DKQTILITACSARGSEEQILKCVELLLSRNADPNV, RLMTPVMYAARAGHPQVVAVLVAYGAEVNT, NGYTALTWAARQGHKNVILKLLELGADKML, and DGKTPSEIAKRNKHLEIFNFLSLSLNPLEG. The region spanning 273–335 is the SAM domain; the sequence is SYAAFEDLEI…KILAALKELE (63 aa).

As to quaternary structure, interacts with DDX4, PIWIL1, RANBP9 and TDRD1.

It is found in the cytoplasm. Plays a central role during spermatogenesis by repressing transposable elements and preventing their mobilization, which is essential for the germline integrity. Acts via the piRNA metabolic process, which mediates the repression of transposable elements during meiosis by forming complexes composed of piRNAs and Piwi proteins and governs the methylation and subsequent repression of transposons. Its association with pi-bodies suggests a participation in the primary piRNAs metabolic process. Required prior to the pachytene stage to facilitate the production of multiple types of piRNAs, including those associated with repeats involved in the regulation of retrotransposons. May act by mediating protein-protein interactions during germ cell maturation. The chain is Ankyrin repeat, SAM and basic leucine zipper domain-containing protein 1 (ASZ1) from Dasypus novemcinctus (Nine-banded armadillo).